The primary structure comprises 258 residues: Venom plasminogen activator LV-PA (258 aa).

A signal peptide spans M1–A18. Positions Q19 to L24 are excised as a propeptide. The Peptidase S1 domain occupies V25–A249. Residue N44 is glycosylated (N-linked (GlcNAc...) asparagine). C50 and C66 form a disulfide bridge. Active-site charge relay system residues include H65 and D110. Intrachain disulfides connect C142–C210, C174–C189, and C200–C225. S204 functions as the Charge relay system in the catalytic mechanism.

The protein belongs to the peptidase S1 family. Snake venom subfamily. In terms of assembly, monomer. Post-translationally, N-glycosylated. PubMed:17034951 shows that it contains approximately 10% carbohydrates, PubMed:10871053 shows that it contains approximately 20% carbohydrates. In terms of tissue distribution, expressed by the venom gland.

It is found in the secreted. Its activity is regulated as follows. Inhibited by the serine protease inhibitors NPGB, PMSF, p-aminobenzamidine and aprotinin. Not inhibited by soybean trypsin inhibitor or EDTA. Functionally, snake venom serine protease that activates plasminogen. Weakly hydrolyzes the alpha chain of human fibrinogen without releasing fibrinopeptide A. Does not hydrolyze plasma kallikrein or factor Xa. Does not clot fibrinogen. Does not affect platelet function. Induces hypotensive effects on rats. Shows a preferential cleavage at Lys-|-Xaa over Arg-|-Xaa bonds. This is Venom plasminogen activator LV-PA from Lachesis muta muta (Bushmaster).